Consider the following 774-residue polypeptide: Alpha,alpha-trehalose phosphorylase (774 aa).

369-370 lines the substrate pocket; it reads WD. The active-site Proton donor is the Glu-498. 610–611 contacts substrate; sequence KQ.

The protein belongs to the glycosyl hydrolase 65 family. Homodimer.

The catalysed reaction is alpha,alpha-trehalose + phosphate = beta-D-glucose 1-phosphate + D-glucose. The protein operates within glycan degradation; trehalose degradation. Inhibited by Cu(2+), Hg(2+), Mg(2+), Mn(2+), Pb(2+) and Zn(2+). Functionally, catalyzes the reversible phosphorolytic cleavage of trehalose. Phosphorolysis is specific for trehalose, but D-xylose, D-galactose, L-arabinose, D-fucose, L-fucose, D-glucosamine and 2-deoxy D-glucose can act as substitutes for D-glucose in the synthetic reaction. The polypeptide is Alpha,alpha-trehalose phosphorylase (treP) (Thermoanaerobacter brockii (Thermoanaerobium brockii)).